A 370-amino-acid chain; its full sequence is E3 ubiquitin-protein ligase E3D (370 aa).

N-acetylalanine is present on alanine 2. The BRAT1-like motif motif lies at 129–159; that stretch reads PLPSENWSALVGEWCCHPDPFANKPLHPREN. Position 144 (cysteine 144) interacts with Zn(2+). The segment at 214–236 is interaction with UBE2C; the sequence is QPSEGSFPNIPRSQFVQSVIARC. An HECT-like region spans residues 332–368; that stretch reads LPSTTCLELLLILSRNNASLPLSLRQMNSFQLWCSHC.

Interacts with UBE2C/UbcH10 (E2 ubiquitin-conjugating enzyme). In vitro, interacts with cyclin-B. In terms of processing, ubiquitinated by UBCH10 (E2 ubiquitin-conjugating enzyme).

It is found in the cytoplasm. The enzyme catalyses S-ubiquitinyl-[E2 ubiquitin-conjugating enzyme]-L-cysteine + [acceptor protein]-L-lysine = [E2 ubiquitin-conjugating enzyme]-L-cysteine + N(6)-ubiquitinyl-[acceptor protein]-L-lysine.. Its pathway is protein modification; protein ubiquitination. Its function is as follows. E3 ubiquitin-protein ligase which accepts ubiquitin from specific E2 ubiquitin-conjugating enzymes, and transfers it to substrates, generally promoting their degradation by the proteasome. Independently of its E3 ubiquitin-protein ligase activity, acts as an inhibitor of CPSF3 endonuclease activity by blocking CPSF3 active site. The chain is E3 ubiquitin-protein ligase E3D (Ube3d) from Rattus norvegicus (Rat).